Consider the following 760-residue polypeptide: Pentatricopeptide repeat-containing protein At1g20230 (760 aa).

PPR repeat units follow at residues Asp49–Pro79, Thr80–Pro114, Asp115–Met149, Asp150–Lys180, Asp181–Ala215, Asn216–Pro250, Asp251–Lys285, Asp286–Met316, Glu317–Leu351, Asn352–Pro386, Asn387–Asp421, Asn422–Lys452, Asn453–Pro487, Asp488–Pro523, and Arg524–Glu554. The tract at residues Val559–Lys634 is type E motif. The tract at residues Asn635 to Arg665 is type E(+) motif. The type DYW motif stretch occupies residues Lys666–Trp760.

This sequence belongs to the PPR family. PCMP-H subfamily.

The sequence is that of Pentatricopeptide repeat-containing protein At1g20230 (PCMP-H21) from Arabidopsis thaliana (Mouse-ear cress).